A 162-amino-acid polypeptide reads, in one-letter code: uncharacterized protein (162 aa).

This is an uncharacterized protein from Bacillus subtilis (strain 168).